Here is a 689-residue protein sequence, read N- to C-terminus: UvrABC system protein C (689 aa).

Positions 16-95 constitute a GIY-YIG domain; it reads TNPGVYRFRD…IKEFAPRFNI (80 aa). One can recognise a UVR domain in the interval 208–243; that stretch reads KPYIRELTRQMNEAAECMDFETAAARRDDVGALERV. The tract at residues 316–337 is disordered; that stretch reads LAPAASGRRRTARHGSEDVVGQ.

Belongs to the UvrC family. As to quaternary structure, interacts with UvrB in an incision complex.

The protein resides in the cytoplasm. Its function is as follows. The UvrABC repair system catalyzes the recognition and processing of DNA lesions. UvrC both incises the 5' and 3' sides of the lesion. The N-terminal half is responsible for the 3' incision and the C-terminal half is responsible for the 5' incision. This chain is UvrABC system protein C, found in Kocuria rhizophila (strain ATCC 9341 / DSM 348 / NBRC 103217 / DC2201).